Consider the following 335-residue polypeptide: Biotin synthase (335 aa).

Residues 43 to 269 form the Radical SAM core domain; that stretch reads YFGKKVKLNM…INPTKEIRIA (227 aa). Residues Cys-61, Cys-65, and Cys-68 each contribute to the [4Fe-4S] cluster site. [2Fe-2S] cluster contacts are provided by Cys-104, Cys-137, Cys-197, and Arg-267.

The protein belongs to the radical SAM superfamily. Biotin synthase family. Homodimer. The cofactor is [4Fe-4S] cluster. Requires [2Fe-2S] cluster as cofactor.

The enzyme catalyses (4R,5S)-dethiobiotin + (sulfur carrier)-SH + 2 reduced [2Fe-2S]-[ferredoxin] + 2 S-adenosyl-L-methionine = (sulfur carrier)-H + biotin + 2 5'-deoxyadenosine + 2 L-methionine + 2 oxidized [2Fe-2S]-[ferredoxin]. It functions in the pathway cofactor biosynthesis; biotin biosynthesis; biotin from 7,8-diaminononanoate: step 2/2. Catalyzes the conversion of dethiobiotin (DTB) to biotin by the insertion of a sulfur atom into dethiobiotin via a radical-based mechanism. The protein is Biotin synthase of Staphylococcus aureus (strain MSSA476).